Reading from the N-terminus, the 758-residue chain is Meiotic driver SPOK4 (758 aa).

The stretch at 4–41 (KDRITQLLRKLEEAKAREEEAKAREAQERCEKERLQLE) forms a coiled coil. Disordered regions lie at residues 180 to 230 (ELTQ…GVGI) and 414 to 499 (LSSA…MADP). A compositionally biased stretch (basic and acidic residues) spans 181-190 (LTQEDDRSSG). Polar residues predominate over residues 416–429 (SAASSQNTENSEYT). Residues 457–468 (NEHDEHDEDHSE) are compositionally biased toward basic and acidic residues.

The protein resides in the cytoplasm. It localises to the nucleus. Functionally, promotes unequal transmission of alleles from the parental zygote to progeny spores by acting as poison/antidote system, leading to poisoning of progeny that do not inherit the allele. May possess DNA nuclease activity that leads to spore killing, and a kinase activity that confers resistance to the nuclease activity. Can suppress meiotic drive by the P.comata SPOK1 protein. This chain is Meiotic driver SPOK4, found in Podospora anserina (Pleurage anserina).